A 406-amino-acid polypeptide reads, in one-letter code: Phosphopentomutase (406 aa).

Residues D10, D305, H310, D346, H347, and H358 each coordinate Mn(2+).

Belongs to the phosphopentomutase family. It depends on Mn(2+) as a cofactor.

Its subcellular location is the cytoplasm. It carries out the reaction 2-deoxy-alpha-D-ribose 1-phosphate = 2-deoxy-D-ribose 5-phosphate. It catalyses the reaction alpha-D-ribose 1-phosphate = D-ribose 5-phosphate. It participates in carbohydrate degradation; 2-deoxy-D-ribose 1-phosphate degradation; D-glyceraldehyde 3-phosphate and acetaldehyde from 2-deoxy-alpha-D-ribose 1-phosphate: step 1/2. Isomerase that catalyzes the conversion of deoxy-ribose 1-phosphate (dRib-1-P) and ribose 1-phosphate (Rib-1-P) to deoxy-ribose 5-phosphate (dRib-5-P) and ribose 5-phosphate (Rib-5-P), respectively. The chain is Phosphopentomutase from Vibrio cholerae serotype O1 (strain ATCC 39541 / Classical Ogawa 395 / O395).